The following is an 87-amino-acid chain: U3-theraphotoxin-Hhn1b (87 aa).

The N-terminal stretch at 1–24 (MVNMKASMFLTFAGLVLLFVVCYA) is a signal peptide. A propeptide spanning residues 25 to 52 (SESEEKEFPREMLSSIFAVDNDFKQEER) is cleaved from the precursor. 2 disulfide bridges follow: Cys-54-Cys-67 and Cys-61-Cys-72.

The protein belongs to the neurotoxin 10 (Hwtx-1) family. 51 (Hntx-8) subfamily. Hntx-8 sub-subfamily. Expressed by the venom gland.

It is found in the secreted. Functionally, ion channel inhibitor. The polypeptide is U3-theraphotoxin-Hhn1b (Cyriopagopus hainanus (Chinese bird spider)).